The chain runs to 347 residues: GMP reductase (347 aa).

108–131 (TDFEKTKQILIANPALNFLCIDVA) lines the NADP(+) pocket. Positions 181 and 183 each coordinate K(+). Cysteine 186 acts as the Thioimidate intermediate in catalysis. Residue 216–239 (IISDGGCTMPGDVAKAFGGGADFV) coordinates NADP(+).

It belongs to the IMPDH/GMPR family. GuaC type 1 subfamily. As to quaternary structure, homotetramer.

It catalyses the reaction IMP + NH4(+) + NADP(+) = GMP + NADPH + 2 H(+). Catalyzes the irreversible NADPH-dependent deamination of GMP to IMP. It functions in the conversion of nucleobase, nucleoside and nucleotide derivatives of G to A nucleotides, and in maintaining the intracellular balance of A and G nucleotides. The chain is GMP reductase from Enterobacter sp. (strain 638).